Reading from the N-terminus, the 200-residue chain is Superoxide dismutase [Mn] (200 aa).

Mn(2+) is bound by residues histidine 27, histidine 77, aspartate 160, and histidine 164.

It belongs to the iron/manganese superoxide dismutase family. As to quaternary structure, homodimer. It depends on Mn(2+) as a cofactor.

The enzyme catalyses 2 superoxide + 2 H(+) = H2O2 + O2. Destroys superoxide anion radicals which are normally produced within the cells and which are toxic to biological systems. This is Superoxide dismutase [Mn] (sodB) from Rhizobium meliloti (strain 1021) (Ensifer meliloti).